The following is a 340-amino-acid chain: NADH-quinone oxidoreductase subunit H (340 aa).

8 consecutive transmembrane segments (helical) span residues 4-24, 78-98, 113-133, 151-171, 184-204, 244-264, 273-293, and 316-336; these read TIGI…PLLI, YLFV…WAVI, VLYL…AGWA, VSYE…AGSM, MLHW…ISGI, SMIL…LSPF, IFFI…FLFV, and VLIP…VAHV.

The protein belongs to the complex I subunit 1 family. As to quaternary structure, NDH-1 is composed of 14 different subunits. Subunits NuoA, H, J, K, L, M, N constitute the membrane sector of the complex.

Its subcellular location is the cell inner membrane. It catalyses the reaction a quinone + NADH + 5 H(+)(in) = a quinol + NAD(+) + 4 H(+)(out). NDH-1 shuttles electrons from NADH, via FMN and iron-sulfur (Fe-S) centers, to quinones in the respiratory chain. The immediate electron acceptor for the enzyme in this species is believed to be ubiquinone. Couples the redox reaction to proton translocation (for every two electrons transferred, four hydrogen ions are translocated across the cytoplasmic membrane), and thus conserves the redox energy in a proton gradient. This subunit may bind ubiquinone. This Legionella pneumophila subsp. pneumophila (strain Philadelphia 1 / ATCC 33152 / DSM 7513) protein is NADH-quinone oxidoreductase subunit H.